The following is a 558-amino-acid chain: Ceramide kinase-like protein (558 aa).

Residues 1–36 (MPWRRRRNRVSALEGGREEEAPPEAAAVPPALLTSP) form a disordered region. 2 short sequence motifs (nuclear localization signal) span residues 2-9 (PWRRRRNR) and 102-106 (KLKRR). Positions 164–339 (NRPKSLKILL…VDVCTFSTAG (176 aa)) constitute a DAGKc domain.

Phosphorylated on serine residues. Isoform 1 and isoform 2 are expressed in adult retina, liver and pancreas as well as in fetal brain, lung and kidney. Isoform 3 is expressed in adult retina as well as in fetal lung and liver. Isoform 4 is expressed in adult retina, lung and kidney as well as in fetal lung and liver. Moderately expressed in retina, kidney, lung, testis, trachea, and pancreas. Weakly expressed in brain, placenta and liver.

The protein resides in the cytoplasm. The protein localises to the nucleus. Its subcellular location is the nucleolus. It is found in the golgi apparatus. It localises to the trans-Golgi network. The protein resides in the endoplasmic reticulum. Its function is as follows. Has no detectable ceramide-kinase activity. Overexpression of CERKL protects cells from apoptosis in oxidative stress conditions. This Homo sapiens (Human) protein is Ceramide kinase-like protein (CERKL).